The primary structure comprises 249 residues: 5'-nucleotidase SurE (249 aa).

A divalent metal cation-binding residues include Asp-8, Asp-9, Ser-39, and Asn-91.

It belongs to the SurE nucleotidase family. Requires a divalent metal cation as cofactor.

The protein localises to the cytoplasm. It catalyses the reaction a ribonucleoside 5'-phosphate + H2O = a ribonucleoside + phosphate. In terms of biological role, nucleotidase that shows phosphatase activity on nucleoside 5'-monophosphates. This Pseudomonas fluorescens (strain Pf0-1) protein is 5'-nucleotidase SurE.